The primary structure comprises 147 residues: D-aminoacyl-tRNA deacylase (147 aa).

Residues 136–137 (GP) carry the Gly-cisPro motif, important for rejection of L-amino acids motif.

This sequence belongs to the DTD family. As to quaternary structure, homodimer.

It localises to the cytoplasm. The enzyme catalyses glycyl-tRNA(Ala) + H2O = tRNA(Ala) + glycine + H(+). It catalyses the reaction a D-aminoacyl-tRNA + H2O = a tRNA + a D-alpha-amino acid + H(+). In terms of biological role, an aminoacyl-tRNA editing enzyme that deacylates mischarged D-aminoacyl-tRNAs. Also deacylates mischarged glycyl-tRNA(Ala), protecting cells against glycine mischarging by AlaRS. Acts via tRNA-based rather than protein-based catalysis; rejects L-amino acids rather than detecting D-amino acids in the active site. By recycling D-aminoacyl-tRNA to D-amino acids and free tRNA molecules, this enzyme counteracts the toxicity associated with the formation of D-aminoacyl-tRNA entities in vivo and helps enforce protein L-homochirality. This is D-aminoacyl-tRNA deacylase from Streptococcus suis (strain 98HAH33).